A 404-amino-acid chain; its full sequence is BRCA1-A complex subunit Abraxas 1 (404 aa).

Positions Tyr7–Gln161 constitute an MPN domain. The stretch at Met219–Asp268 forms a coiled coil. Residues Gly339–Phe404 are disordered. The segment covering Arg391–Phe404 has biased composition (polar residues). At Ser401 the chain carries Phosphoserine. The pSXXF motif motif lies at Ser401 to Phe404.

Belongs to the FAM175 family. Abraxas subfamily. As to quaternary structure, component of the BRCA1-A complex. Component of the BRISC complex. Homodimer. Interacts directly (when phosphorylated at Ser-401) with brca1. The phosphorylated homodimer can interact directly with two brca1 chains, giving rise to a heterotetramer. Post-translationally, phosphorylation of Ser-401 of the pSXXF motif by ATM or ATR constitutes a specific recognition motif for the BRCT domain of BRCA1.

It is found in the nucleus. Functionally, involved in DNA damage response and double-strand break (DSB) repair. Component of the BRCA1-A complex, acting as a central scaffold protein that assembles the various components of the complex and mediates the recruitment of brca1. The BRCA1-A complex specifically recognizes 'Lys-63'-linked ubiquitinated histones H2A and H2AX at DNA lesion sites, leading to target the brca1-bard1 heterodimer to sites of DNA damage at DSBs. This complex also possesses deubiquitinase activity that specifically removes 'Lys-63'-linked ubiquitin on histones H2A and H2AX. The chain is BRCA1-A complex subunit Abraxas 1 from Salmo salar (Atlantic salmon).